The chain runs to 388 residues: (S)-8-oxocitronellyl enol synthase ISY1 (388 aa).

NADP(+) contacts are provided by residues 35–37 (TGI), 63–64 (RR), 81–82 (DV), 105–106 (TW), and Gln143. Active-site residues include Lys147 and Tyr178. NADP(+) contacts are provided by residues Tyr178, Ile205, and 212–214 (SMM).

It belongs to the short-chain dehydrogenases/reductases (SDR) family.

It carries out the reaction (S)-8-oxocitronellyl enol + NADP(+) = (6E)-8-oxogeranial + NADPH + H(+). It catalyses the reaction (S)-8-oxocitronellyl enol + NAD(+) = (6E)-8-oxogeranial + NADH + H(+). In terms of biological role, iridoid synthase that catalyzes the first step in generation of the iridoid ring scaffold using the linear monoterpene (6E)-8-oxogeranial as substrate. Iridoids comprise a large family of distinctive bicyclic monoterpenes that possess a wide range of pharmacological activities, including anticancer, anti-inflammatory, antifungal and antibacterial activities. Catalyzes the conversion of the linear monoterpene (6E)-8-oxogeranial to (S)-8-oxocitronellyl enol, a precursor of nepetalactones, which are metabolites that are both insect-repellent and have euphoric effect in cats. The polypeptide is (S)-8-oxocitronellyl enol synthase ISY1 (Nepeta racemosa (Catmint)).